The chain runs to 302 residues: MALLISLPGGTPAMAQILLLLSSACLHAGNSERSNRKNGFGVNQPESCSGVQGGSIDIPFSFYFPWKLAKDPQMSIAWRWKDFHGEFIYNSSLPFIHEHFKGRLILNWTQGQTSGVLRILNLKESDQTRYFGRVFLQTTEGIQFWQSIPGTQLNVTNATCTPTTLPSTTAATSAHTQNDITEVKSANIGGLDLQTTVGLATAAAVFLVGVLGLIVFLWWKRRRQGQKTKAEIPAREPLETSEKHESVGHEGQCMDPKENPKDNNIVYASISLSSPTSPGTAPNLPVHGNPQEETVYSIVKAK.

An N-terminal signal peptide occupies residues 1–31 (MALLISLPGGTPAMAQILLLLSSACLHAGNS). At 32-198 (ERSNRKNGFG…GGLDLQTTVG (167 aa)) the chain is on the extracellular side. N-linked (GlcNAc...) asparagine glycosylation is found at Asn90 and Asn107. Residues 199-219 (LATAAAVFLVGVLGLIVFLWW) traverse the membrane as a helical segment. The Cytoplasmic segment spans residues 220-302 (KRRRQGQKTK…ETVYSIVKAK (83 aa)). Residues 228–248 (TKAEIPAREPLETSEKHESVG) are compositionally biased toward basic and acidic residues. The segment at 228–293 (TKAEIPAREP…LPVHGNPQEE (66 aa)) is disordered. Short sequence motifs (ITIM motif) lie at residues 265–270 (IVYASI) and 294–299 (TVYSIV). Residues 270–280 (ISLSSPTSPGT) show a composition bias toward polar residues.

In terms of assembly, interacts with CD99. Phosphorylated on tyrosine residues.

The protein resides in the membrane. In terms of biological role, paired receptors consist of highly related activating and inhibitory receptors and are widely involved in the regulation of the immune system. Receptor for CD99 and PIANP. This Mus musculus (Mouse) protein is Paired immunoglobulin-like type 2 receptor alpha (Pilra).